The primary structure comprises 88 residues: Putative septation protein SpoVG (88 aa).

The protein belongs to the SpoVG family.

Functionally, could be involved in septation. This chain is Putative septation protein SpoVG, found in Caldicellulosiruptor saccharolyticus (strain ATCC 43494 / DSM 8903 / Tp8T 6331).